The primary structure comprises 62 residues: Beta-defensin 110 (62 aa).

Positions 1–21 (MKIHLFFFILLFWVTILPARS) are cleaved as a signal peptide. Disulfide bonds link cysteine 32–cysteine 60, cysteine 39–cysteine 53, and cysteine 43–cysteine 61.

It belongs to the beta-defensin family.

The protein localises to the secreted. Functionally, has antibacterial activity. This chain is Beta-defensin 110 (DEFB110), found in Canis lupus familiaris (Dog).